The following is a 731-amino-acid chain: Catalase-peroxidase 2 (731 aa).

Over residues 1 to 10 (MAETPNSDMS) the composition is skewed to polar residues. The tract at residues 1-26 (MAETPNSDMSGATGGRSKRPKSNQDW) is disordered. The segment at residues 95-218 (WHSAGTYRTA…LGASVMGLIY (124 aa)) is a cross-link (tryptophyl-tyrosyl-methioninium (Trp-Tyr) (with M-244)). The active-site Proton acceptor is H96. The tryptophyl-tyrosyl-methioninium (Tyr-Met) (with W-95) cross-link spans 218-244 (YVNPEGPDGNPDPEASAKNIRQTFDRM). H259 contributes to the heme b binding site.

In terms of assembly, homodimer. It depends on heme b as a cofactor. Post-translationally, formation of the three residue Trp-Tyr-Met cross-link is important for the catalase, but not the peroxidase activity of the enzyme.

It carries out the reaction H2O2 + AH2 = A + 2 H2O. The enzyme catalyses 2 H2O2 = O2 + 2 H2O. Its function is as follows. Bifunctional enzyme with both catalase and broad-spectrum peroxidase activity. This Haloarcula marismortui (strain ATCC 43049 / DSM 3752 / JCM 8966 / VKM B-1809) (Halobacterium marismortui) protein is Catalase-peroxidase 2.